The following is a 283-amino-acid chain: NAD kinase (283 aa).

Residue aspartate 68 is the Proton acceptor of the active site. NAD(+)-binding positions include 68–69, 142–143, arginine 153, aspartate 172, 183–188, and glutamine 242; these read DG, ND, and TAYSLS.

The protein belongs to the NAD kinase family. A divalent metal cation is required as a cofactor.

Its subcellular location is the cytoplasm. The catalysed reaction is NAD(+) + ATP = ADP + NADP(+) + H(+). Involved in the regulation of the intracellular balance of NAD and NADP, and is a key enzyme in the biosynthesis of NADP. Catalyzes specifically the phosphorylation on 2'-hydroxyl of the adenosine moiety of NAD to yield NADP. The chain is NAD kinase from Thermoanaerobacter pseudethanolicus (strain ATCC 33223 / 39E) (Clostridium thermohydrosulfuricum).